A 214-amino-acid chain; its full sequence is YPESIDWREKGAVTPVKNQNPCGSCWAFSTVATIEGINKIITGQLISLSEQELLDCEYRSHGCDGGYQTPSLQYVVDNGVHTEREYPYEKKQGRCRAKDKKGPKVYITGYKYVPANDEISLIQAIANQPVSVVTDSRGRGFQFYKGGIYEGPCGTNTDHAVTAVGYGKTYLLLKNSWGPNWGEKGYIRIKRASGRSKGTCGVYTSSFFPIKGYR.

3 disulfides stabilise this stretch: Cys22–Cys63, Cys56–Cys95, and Cys153–Cys200. Cys25 is a catalytic residue. Cys25 is an E64 binding site. Active-site residues include His159 and Asn175.

The protein belongs to the peptidase C1 family. As to expression, expressed in latex.

The protein resides in the secreted. Functionally, cysteine protease. The polypeptide is Mexicain (Jacaratia mexicana (Wild papaya)).